The chain runs to 705 residues: Phosphoribosylformylglycinamidine synthase subunit PurL (705 aa).

Residue His-32 is part of the active site. Tyr-35 serves as a coordination point for ATP. Mg(2+) is bound at residue Glu-76. Residues 77 to 80 and Arg-99 each bind substrate; that span reads SHNH. The active-site Proton acceptor is the His-78. Asp-100 is a binding site for Mg(2+). Gln-224 contacts substrate. Residue Asp-252 coordinates Mg(2+). 296-298 lines the substrate pocket; that stretch reads ESQ. The ATP site is built by Asp-471 and Gly-508. A Mg(2+)-binding site is contributed by Asn-509. Ser-511 contacts substrate.

This sequence belongs to the FGAMS family. As to quaternary structure, monomer. Part of the FGAM synthase complex composed of 1 PurL, 1 PurQ and 2 PurS subunits.

The protein resides in the cytoplasm. It catalyses the reaction N(2)-formyl-N(1)-(5-phospho-beta-D-ribosyl)glycinamide + L-glutamine + ATP + H2O = 2-formamido-N(1)-(5-O-phospho-beta-D-ribosyl)acetamidine + L-glutamate + ADP + phosphate + H(+). It participates in purine metabolism; IMP biosynthesis via de novo pathway; 5-amino-1-(5-phospho-D-ribosyl)imidazole from N(2)-formyl-N(1)-(5-phospho-D-ribosyl)glycinamide: step 1/2. Part of the phosphoribosylformylglycinamidine synthase complex involved in the purines biosynthetic pathway. Catalyzes the ATP-dependent conversion of formylglycinamide ribonucleotide (FGAR) and glutamine to yield formylglycinamidine ribonucleotide (FGAM) and glutamate. The FGAM synthase complex is composed of three subunits. PurQ produces an ammonia molecule by converting glutamine to glutamate. PurL transfers the ammonia molecule to FGAR to form FGAM in an ATP-dependent manner. PurS interacts with PurQ and PurL and is thought to assist in the transfer of the ammonia molecule from PurQ to PurL. The polypeptide is Phosphoribosylformylglycinamidine synthase subunit PurL (Pyrococcus horikoshii (strain ATCC 700860 / DSM 12428 / JCM 9974 / NBRC 100139 / OT-3)).